We begin with the raw amino-acid sequence, 1156 residues long: Nuclear pore complex protein Nup133 (1156 aa).

The residue at position 1 (Met-1) is an N-acetylmethionine. The interval Met-1–Leu-39 is disordered. Phosphoserine is present on residues Ser-7 and Ser-15. At Arg-17 the chain carries Omega-N-methylarginine. Ser-27 carries the post-translational modification Phosphoserine. Thr-28 is modified (phosphothreonine). Arg-30 is modified (omega-N-methylarginine). Ser-41, Ser-45, Ser-50, Ser-72, Ser-131, Ser-480, Ser-489, Ser-493, Ser-501, and Ser-755 each carry phosphoserine. Lys-787 bears the N6-acetyllysine mark. Ser-1133 is subject to Phosphoserine.

The protein belongs to the nucleoporin Nup133 family. In terms of assembly, forms part of the Nup160 subcomplex in the nuclear pore which is composed of NUP160, NUP133, NUP107 and Nup96. This complex plays a role in RNA export and in tethering Nup98 and NUP153 to the nucleus. In terms of tissue distribution, widely expressed in fetal and adult tissues. Expressed in the brain and kidney.

Its subcellular location is the nucleus. It is found in the nuclear pore complex. It localises to the chromosome. The protein localises to the centromere. The protein resides in the kinetochore. In terms of biological role, involved in poly(A)+ RNA transport. Involved in nephrogenesis. The sequence is that of Nuclear pore complex protein Nup133 (NUP133) from Homo sapiens (Human).